Consider the following 317-residue polypeptide: Olfactory receptor 2B11 (317 aa).

Over 1–29 the chain is Extracellular; sequence MKSDNHSFLGDSPKAFILLGVSDRPWLEL. Asn-5 carries N-linked (GlcNAc...) asparagine glycosylation. The chain crosses the membrane as a helical span at residues 30-53; that stretch reads PLFVVLLLSYVLAMLGNVAIILAS. The Cytoplasmic segment spans residues 54 to 61; that stretch reads RVDPQLHS. A helical transmembrane segment spans residues 62–83; the sequence is PMYIFLSHLSFLDLCYTTTTVP. At 84–104 the chain is on the extracellular side; that stretch reads QMLVNMGSSQKTISYGGCTVQ. Cys-101 and Cys-193 form a disulfide bridge. The chain crosses the membrane as a helical span at residues 105 to 124; that stretch reads YAVFHWLGCTECIVLAAMAL. The Cytoplasmic portion of the chain corresponds to 125–143; it reads DRYVAICKPLHYAVLMHRA. A helical transmembrane segment spans residues 144–162; the sequence is LCQQLVALAWLSGFGNSFV. Topologically, residues 163–199 are extracellular; that stretch reads QVVLTVQLPFCGRQVLNNFFCEVPAVIKLSCADTAVN. N-linked (GlcNAc...) asparagine glycosylation is present at Asn-199. Residues 200 to 223 form a helical membrane-spanning segment; the sequence is DTILAVLVAFFVLVPLALILLSYG. The Cytoplasmic portion of the chain corresponds to 224–240; sequence FIARAVLRIQSSKGRHK. Residues 241 to 263 form a helical membrane-spanning segment; the sequence is AFGTCSSHLMIVSLFYLPAIYMY. The Extracellular portion of the chain corresponds to 264 to 276; that stretch reads LQPPSSYSQEQGK. Residues 277–296 form a helical membrane-spanning segment; that stretch reads FISLFYSIITPTLNPFTYTL. Over 297 to 317 the chain is Cytoplasmic; sequence RNKDMKGALRRLLARIWRLCG.

Belongs to the G-protein coupled receptor 1 family.

It is found in the cell membrane. Odorant receptor. This chain is Olfactory receptor 2B11 (OR2B11), found in Homo sapiens (Human).